Reading from the N-terminus, the 335-residue chain is Methionine import ATP-binding protein MetN 2 (335 aa).

Positions 2 to 242 (IEFQNVHKTY…PEHPTTKRFV (241 aa)) constitute an ABC transporter domain. ATP is bound at residue 38-45 (GHSGAGKS).

It belongs to the ABC transporter superfamily. Methionine importer (TC 3.A.1.24) family. As to quaternary structure, the complex is composed of two ATP-binding proteins (MetN), two transmembrane proteins (MetI) and a solute-binding protein (MetQ).

Its subcellular location is the cell inner membrane. The enzyme catalyses L-methionine(out) + ATP + H2O = L-methionine(in) + ADP + phosphate + H(+). It catalyses the reaction D-methionine(out) + ATP + H2O = D-methionine(in) + ADP + phosphate + H(+). In terms of biological role, part of the ABC transporter complex MetNIQ involved in methionine import. Responsible for energy coupling to the transport system. This Pseudomonas entomophila (strain L48) protein is Methionine import ATP-binding protein MetN 2.